We begin with the raw amino-acid sequence, 148 residues long: Small ribosomal subunit protein bS6 (148 aa).

Residues 97 to 148 (EEGPSAMLQRRDDRERGDRGDRGPRRDFDDRGPRRPREDDRPRRSREDEGDE) form a disordered region.

Belongs to the bacterial ribosomal protein bS6 family.

Functionally, binds together with bS18 to 16S ribosomal RNA. This chain is Small ribosomal subunit protein bS6, found in Chelativorans sp. (strain BNC1).